The following is a 209-amino-acid chain: Large ribosomal subunit protein uL4 (209 aa).

The tract at residues 46-72 (GTSSTKTRSEVRGSSKKPWKQKGTGRA) is disordered. Residues 59-72 (SSKKPWKQKGTGRA) are compositionally biased toward basic residues.

The protein belongs to the universal ribosomal protein uL4 family. Part of the 50S ribosomal subunit.

One of the primary rRNA binding proteins, this protein initially binds near the 5'-end of the 23S rRNA. It is important during the early stages of 50S assembly. It makes multiple contacts with different domains of the 23S rRNA in the assembled 50S subunit and ribosome. Its function is as follows. Forms part of the polypeptide exit tunnel. This Borreliella burgdorferi (strain ATCC 35210 / DSM 4680 / CIP 102532 / B31) (Borrelia burgdorferi) protein is Large ribosomal subunit protein uL4.